The following is a 141-amino-acid chain: HTH-type transcriptional repressor NsrR (141 aa).

The region spanning 2-129 is the HTH rrf2-type domain; sequence QLTNFTDYGL…DNYTLADLVE (128 aa). Positions 28–51 form a DNA-binding region, H-T-H motif; that stretch reads ISEVTDVYGVSRNHMVKIINQLSR. [2Fe-2S] cluster is bound by residues cysteine 91, cysteine 96, and cysteine 102.

The cofactor is [2Fe-2S] cluster.

Functionally, nitric oxide-sensitive repressor of genes involved in protecting the cell against nitrosative stress. May require iron for activity. This chain is HTH-type transcriptional repressor NsrR, found in Shigella boydii serotype 18 (strain CDC 3083-94 / BS512).